The chain runs to 86 residues: Small ribosomal subunit protein bS20 (86 aa).

A disordered region spans residues 1–25 (MANIKSQIKRIRTNEKARQRNKAYK). Basic and acidic residues predominate over residues 12–25 (RTNEKARQRNKAYK).

Belongs to the bacterial ribosomal protein bS20 family.

Functionally, binds directly to 16S ribosomal RNA. The polypeptide is Small ribosomal subunit protein bS20 (Beutenbergia cavernae (strain ATCC BAA-8 / DSM 12333 / CCUG 43141 / JCM 11478 / NBRC 16432 / NCIMB 13614 / HKI 0122)).